The primary structure comprises 148 residues: Deoxyuridine 5'-triphosphate nucleotidohydrolase (148 aa).

Substrate-binding positions include 67–69 (RSG), Asn-80, 84–86 (LID), and Met-94.

This sequence belongs to the dUTPase family. Mg(2+) serves as cofactor.

The enzyme catalyses dUTP + H2O = dUMP + diphosphate + H(+). Its pathway is pyrimidine metabolism; dUMP biosynthesis; dUMP from dCTP (dUTP route): step 2/2. In terms of biological role, this enzyme is involved in nucleotide metabolism: it produces dUMP, the immediate precursor of thymidine nucleotides and it decreases the intracellular concentration of dUTP so that uracil cannot be incorporated into DNA. The sequence is that of Deoxyuridine 5'-triphosphate nucleotidohydrolase from Burkholderia multivorans (strain ATCC 17616 / 249).